We begin with the raw amino-acid sequence, 337 residues long: Ketol-acid reductoisomerase (NADP(+)) (337 aa).

Positions 1 to 180 constitute a KARI N-terminal Rossmann domain; the sequence is MQVYYDKDAD…GGTKGGVIET (180 aa). Residues 24-27, arginine 47, and serine 51 contribute to the NADP(+) site; that span reads YGSQ. Histidine 106 is an active-site residue. Position 132 (glycine 132) interacts with NADP(+). Residues 181 to 326 form the KARI C-terminal knotted domain; the sequence is TFREETETDL…ARLRAMMPWI (146 aa). Aspartate 189, glutamate 193, glutamate 225, and glutamate 229 together coordinate Mg(2+). Serine 250 contributes to the substrate binding site.

Belongs to the ketol-acid reductoisomerase family. The cofactor is Mg(2+).

The catalysed reaction is (2R)-2,3-dihydroxy-3-methylbutanoate + NADP(+) = (2S)-2-acetolactate + NADPH + H(+). It catalyses the reaction (2R,3R)-2,3-dihydroxy-3-methylpentanoate + NADP(+) = (S)-2-ethyl-2-hydroxy-3-oxobutanoate + NADPH + H(+). Its pathway is amino-acid biosynthesis; L-isoleucine biosynthesis; L-isoleucine from 2-oxobutanoate: step 2/4. It functions in the pathway amino-acid biosynthesis; L-valine biosynthesis; L-valine from pyruvate: step 2/4. Functionally, involved in the biosynthesis of branched-chain amino acids (BCAA). Catalyzes an alkyl-migration followed by a ketol-acid reduction of (S)-2-acetolactate (S2AL) to yield (R)-2,3-dihydroxy-isovalerate. In the isomerase reaction, S2AL is rearranged via a Mg-dependent methyl migration to produce 3-hydroxy-3-methyl-2-ketobutyrate (HMKB). In the reductase reaction, this 2-ketoacid undergoes a metal-dependent reduction by NADPH to yield (R)-2,3-dihydroxy-isovalerate. The sequence is that of Ketol-acid reductoisomerase (NADP(+)) from Neisseria gonorrhoeae (strain ATCC 700825 / FA 1090).